The following is a 297-amino-acid chain: MRIAVIGAGKWGSALHLALKENHNCFISSLHQRDLEDFVSIKEALECEYLVFALSSQGMRAWLKENFINKGQKILIASKGIEDQSCQFLDEIFLDFVPKENFCVLSGPSFAAEVMQKLPTALMISGINQELCKKFASFFPDFIKTYIDNDVRGAEICGAYKNVLAIASGISDGLKLGNNARAALISRGLIEMHRFGKFFGTKEETFLGLSGAGDLFLTATSVLSRNYRVGLKLAQNQKLDSILAELNEVAEGVKTAYAIEKLAKMKGIYTPIVNEVVAIFKGKSVQEATQNLLKQND.

NADPH contacts are provided by tryptophan 11, arginine 33, and lysine 79. Lysine 79, glycine 107, and serine 109 together coordinate sn-glycerol 3-phosphate. Alanine 111 serves as a coordination point for NADPH. Lysine 161, aspartate 214, serine 224, arginine 225, and asparagine 226 together coordinate sn-glycerol 3-phosphate. Catalysis depends on lysine 161, which acts as the Proton acceptor. An NADPH-binding site is contributed by arginine 225. 2 residues coordinate NADPH: valine 249 and glutamate 251.

The protein belongs to the NAD-dependent glycerol-3-phosphate dehydrogenase family.

It localises to the cytoplasm. The catalysed reaction is sn-glycerol 3-phosphate + NAD(+) = dihydroxyacetone phosphate + NADH + H(+). The enzyme catalyses sn-glycerol 3-phosphate + NADP(+) = dihydroxyacetone phosphate + NADPH + H(+). It functions in the pathway membrane lipid metabolism; glycerophospholipid metabolism. Catalyzes the reduction of the glycolytic intermediate dihydroxyacetone phosphate (DHAP) to sn-glycerol 3-phosphate (G3P), the key precursor for phospholipid synthesis. The protein is Glycerol-3-phosphate dehydrogenase [NAD(P)+] of Campylobacter jejuni subsp. jejuni serotype O:2 (strain ATCC 700819 / NCTC 11168).